The chain runs to 218 residues: Dual specificity protein phosphatase TpbA (218 aa).

The first 28 residues, 1–28 (MHRSPLAWLRLLLAAVLGAFLLGGPLHA), serve as a signal peptide directing secretion. The region spanning 44-188 (DPSINLYRMS…YVRGADVDGL (145 aa)) is the Tyrosine-protein phosphatase domain. Residue D105 is the Proton donor/acceptor of the active site. C132 (phosphocysteine intermediate) is an active-site residue.

This sequence belongs to the protein-tyrosine phosphatase family. Monomer in solution.

It is found in the periplasm. The enzyme catalyses O-phospho-L-tyrosyl-[protein] + H2O = L-tyrosyl-[protein] + phosphate. The catalysed reaction is O-phospho-L-threonyl-[protein] + H2O = L-threonyl-[protein] + phosphate. It carries out the reaction O-phospho-L-seryl-[protein] + H2O = L-seryl-[protein] + phosphate. Its activity is regulated as follows. The phosphatase activity is completely inhibited by trisodium orthovanadate, a tyrosine phosphatase specific inhibitor. Its function is as follows. Phosphatase that regulates diverse phenotypes in P.aeruginosa via regulation of the concentration of cellular c-di-GMP. Acts by dephosphorylating the membrane-anchored diguanylate cyclase TpbB at tyrosine and serine/threonine sites, leading to inactivation of TpbB and reduced c-di-GMP production. The reduced cellular c-di-GMP concentration leads to reduced adhesin expression, reduced extracellular polysaccharide (EPS) production, pellicule production, cell aggregation and biofilm formation, and enhanced swimming and swarming. It affects colony morphology and controls rugose colony formation. TpbA also acts as a positive regulator of extracellular DNA (eDNA, a major component of the biofilm matrix) and cell lysis by reducing c-di-GMP concentrations. In vitro shows phosphatase activity toward p-nitrophenyl phosphate (pNPP), tyrosine phosphopeptides and a threonine phosphopeptide. Does not have phosphodiesterases (PDE) activity, and cannot degrade c-di-GMP. The polypeptide is Dual specificity protein phosphatase TpbA (Pseudomonas aeruginosa (strain UCBPP-PA14)).